The primary structure comprises 66 residues: LYR motif-containing protein PHYPADRAFT_186863 (66 aa).

Belongs to the complex I LYR family. LYRM9 subfamily.

This chain is LYR motif-containing protein PHYPADRAFT_186863, found in Physcomitrium patens (Spreading-leaved earth moss).